A 277-amino-acid polypeptide reads, in one-letter code: Indole-3-glycerol phosphate synthase (277 aa).

It belongs to the TrpC family.

It carries out the reaction 1-(2-carboxyphenylamino)-1-deoxy-D-ribulose 5-phosphate + H(+) = (1S,2R)-1-C-(indol-3-yl)glycerol 3-phosphate + CO2 + H2O. It functions in the pathway amino-acid biosynthesis; L-tryptophan biosynthesis; L-tryptophan from chorismate: step 4/5. The sequence is that of Indole-3-glycerol phosphate synthase from Pseudomonas putida (strain GB-1).